We begin with the raw amino-acid sequence, 509 residues long: MGLPWYRVHTVVLNDPGRLIAVHLMHTALVAGWAGSMALYEIAVFDPSDPVLNPMWRQGMFVLPFMVRLGITNSWGGWTINGENVTDPGFWSFEGVAAAHIGLSGLLFLAAIWHWVYWDLELFRDPRTGEPALDLPKMFGIHLFLSGLLCFGFGAFHLTGLFGPGMWVSDAYSITGRVQPVAPAWGPEGFNPFNPGGVVSHHIAAGIVGILAGLFHLSVRPPQRLYKALRMGNIETVLSSSISAVFFAAFIVAGTMWYGSAATPVELFGPTRYQWDQEYFHQEMERRVQKDVAAGASLSEAWNRIPAKLAFYDYIGNNPAKGGLFRAGPMNKGDGIAESWLGHATFKDKEGRELTVRRMPTFFETFPVVLIDKDGVLRADIPFRRAESKYSIEQMGVTVSFYGGKLDGQTFTDAPTVKKYARKAQLGEAFEFDRETLKSDGVFRSSARGWFTFGHASFALIFFFGHLWHGGRTLFRDVFAGIGEEVTEQVEFGAFQKVGDKTTRKQEAG.

A run of 6 helical transmembrane segments spans residues 21 to 36 (AVHL…WAGS), 101 to 115 (IGLS…IWHW), 140 to 156 (GIHL…FGAF), 203 to 218 (IAAG…FHLS), 237 to 252 (VLSS…AFIV), and 457 to 472 (SFAL…HGGR).

This sequence belongs to the PsbB/PsbC family. PsbB subfamily. PSII is composed of 1 copy each of membrane proteins PsbA, PsbB, PsbC, PsbD, PsbE, PsbF, PsbH, PsbI, PsbJ, PsbK, PsbL, PsbM, PsbT, PsbX, PsbY, PsbZ, Psb30/Ycf12, at least 3 peripheral proteins of the oxygen-evolving complex and a large number of cofactors. It forms dimeric complexes. Requires Binds multiple chlorophylls. PSII binds additional chlorophylls, carotenoids and specific lipids. as cofactor.

The protein localises to the plastid. The protein resides in the cyanelle thylakoid membrane. In terms of biological role, one of the components of the core complex of photosystem II (PSII). It binds chlorophyll and helps catalyze the primary light-induced photochemical processes of PSII. PSII is a light-driven water:plastoquinone oxidoreductase, using light energy to abstract electrons from H(2)O, generating O(2) and a proton gradient subsequently used for ATP formation. This is Photosystem II CP47 reaction center protein from Cyanophora paradoxa.